The primary structure comprises 749 residues: Protein phosphatase 1E (749 aa).

Residues 21 to 128 (EFRGPCGGGE…PPLPPLPRPL (108 aa)) form a disordered region. Repeat copies occupy residues 31 to 32 (PE), 33 to 34 (PE), and 35 to 36 (PE). Residues 31–44 (PEPEPESEPEPEPE) are 7 X 2 AA tandem repeats of P-E. Over residues 31–45 (PEPEPESEPEPEPEA) the composition is skewed to acidic residues. The stretch at 37–38 (SE) is one 4; approximate repeat. 3 consecutive repeat copies span residues 39-40 (PE), 41-42 (PE), and 43-44 (PE). Residues 46 to 55 (ELVAAEAAEA) are compositionally biased toward low complexity. Over residues 69 to 102 (ATEEGEQDQDPEPEDEAVEEETATEGEEEEEEEA) the composition is skewed to acidic residues. Pro residues predominate over residues 110 to 126 (VPPPPQPQLPPLPPLPR). A PPM-type phosphatase domain is found at 224–485 (QIYYETSIHA…DNITVIVVFL (262 aa)). Mn(2+)-binding residues include Asp-270, Gly-271, Asp-432, and Asp-476. The tract at residues 495–537 (SEESEWTENSFQGGQEDGGDDKETHGECKRPWPQHQCSAPADL) is disordered. Over residues 515–524 (DKETHGECKR) the composition is skewed to basic and acidic residues. Phosphoserine occurs at positions 532 and 545. The disordered stretch occupies residues 608-627 (VKSSLPERSGAGEPRVSFNL).

This sequence belongs to the PP2C family. Heterotrimer. Interacts with PAX1 and ARHGEF6 (or ARHGEF7). Mg(2+) is required as a cofactor. It depends on Mn(2+) as a cofactor.

It localises to the nucleus. It is found in the cytoplasm. It carries out the reaction O-phospho-L-seryl-[protein] + H2O = L-seryl-[protein] + phosphate. The catalysed reaction is O-phospho-L-threonyl-[protein] + H2O = L-threonyl-[protein] + phosphate. Protein phosphatase that inactivates multifunctional CaM kinases such as CAMK4 and CAMK2. Dephosphorylates and inactivates PAK. May play a role in the inhibition of actin fiber stress breakdown and in morphological changes driven by TNK2/CDC42. Dephosphorylates PRKAA2. This Mus musculus (Mouse) protein is Protein phosphatase 1E (Ppm1e).